A 245-amino-acid polypeptide reads, in one-letter code: Bis(5'-nucleosyl)-tetraphosphatase PrpE [asymmetrical] (245 aa).

It belongs to the PrpE family. Ni(2+) serves as cofactor.

It carries out the reaction P(1),P(4)-bis(5'-guanosyl) tetraphosphate + H2O = GMP + GTP + 2 H(+). Functionally, asymmetrically hydrolyzes Ap4p to yield AMP and ATP. The polypeptide is Bis(5'-nucleosyl)-tetraphosphatase PrpE [asymmetrical] (Geobacillus thermodenitrificans (strain NG80-2)).